The chain runs to 558 residues: Alpha-1,3-mannosyltransferase MNT2 (558 aa).

Residues 1–6 (MRRKNR) lie on the Cytoplasmic side of the membrane. A helical; Signal-anchor for type II membrane protein membrane pass occupies residues 7–27 (LFILVVLLGIVLVVYYSQLNS). Residues 28-558 (LDLVEPVQSS…QIVDIWNKDI (531 aa)) lie on the Lumenal side of the membrane. Asn-187 carries N-linked (GlcNAc...) asparagine glycosylation.

Belongs to the MNN1/MNT family.

The protein resides in the golgi apparatus membrane. Its pathway is protein modification; protein glycosylation. In terms of biological role, mannosyltransferase involved in adding the 4th and 5th mannose residues of O-linked glycans. This Saccharomyces cerevisiae (strain ATCC 204508 / S288c) (Baker's yeast) protein is Alpha-1,3-mannosyltransferase MNT2 (MNT2).